A 514-amino-acid chain; its full sequence is Variant surface glycoprotein ILTAT 1.24 (514 aa).

A signal peptide spans 1–23; that stretch reads MVYRNILQLSVLKVLLIVLIVEA. Intrachain disulfides connect Cys-37–Cys-162 and Cys-143–Cys-204. Residue Asn-443 is glycosylated (N-linked (GlcNAc...) asparagine). The disordered stretch occupies residues 451–476; that stretch reads GVPVTQTQTAGADTTAEKCKGKGEKD. Residues 455–464 show a composition bias toward low complexity; that stretch reads TQTQTAGADT. Residues 465 to 476 are compositionally biased toward basic and acidic residues; it reads TAEKCKGKGEKD. Asp-491 carries the GPI-anchor amidated aspartate lipid modification. A propeptide spans 492–514 (removed in mature form); it reads SSILANKQFALSVASAAFVALLF.

It localises to the cell membrane. In terms of biological role, VSG forms a coat on the surface of the parasite. The trypanosome evades the immune response of the host by expressing a series of antigenically distinct VSGs from an estimated 1000 VSG genes. In Trypanosoma brucei brucei, this protein is Variant surface glycoprotein ILTAT 1.24.